The chain runs to 208 residues: MARLNVKPTRMELSNLKNRLKTATRGHKLLKDKRDELMRRFVDLIRENNELRQTIEKELAANMKEFVLAKASENSLMVEELFAVPVHEVTLWIDIENIMSVNVPKFHVQSNTAREQEQGEFAYSYLSSNSEMDNTIQKTKELLEKLLRLAEVEKTCQLMADDIEKTRRRVNGLEYAIIPQLEETIHYIELKLEEAERASLVRIMKITS.

It belongs to the V-ATPase D subunit family.

Its function is as follows. Produces ATP from ADP in the presence of a proton gradient across the membrane. The polypeptide is V-type ATP synthase subunit D (Streptococcus pyogenes serotype M3 (strain ATCC BAA-595 / MGAS315)).